The chain runs to 299 residues: Phosphoribosylaminoimidazole-succinocarboxamide synthase (299 aa).

This sequence belongs to the SAICAR synthetase family.

It carries out the reaction 5-amino-1-(5-phospho-D-ribosyl)imidazole-4-carboxylate + L-aspartate + ATP = (2S)-2-[5-amino-1-(5-phospho-beta-D-ribosyl)imidazole-4-carboxamido]succinate + ADP + phosphate + 2 H(+). It functions in the pathway purine metabolism; IMP biosynthesis via de novo pathway; 5-amino-1-(5-phospho-D-ribosyl)imidazole-4-carboxamide from 5-amino-1-(5-phospho-D-ribosyl)imidazole-4-carboxylate: step 1/2. This Schizosaccharomyces pombe (strain 972 / ATCC 24843) (Fission yeast) protein is Phosphoribosylaminoimidazole-succinocarboxamide synthase (ade7).